The primary structure comprises 118 residues: Putative pterin-4-alpha-carbinolamine dehydratase (118 aa).

It belongs to the pterin-4-alpha-carbinolamine dehydratase family.

It catalyses the reaction (4aS,6R)-4a-hydroxy-L-erythro-5,6,7,8-tetrahydrobiopterin = (6R)-L-erythro-6,7-dihydrobiopterin + H2O. The sequence is that of Putative pterin-4-alpha-carbinolamine dehydratase from Pseudomonas aeruginosa (strain LESB58).